Here is a 120-residue protein sequence, read N- to C-terminus: UPF0231 protein KPK_4613 (120 aa).

This sequence belongs to the UPF0231 family.

This is UPF0231 protein KPK_4613 from Klebsiella pneumoniae (strain 342).